Here is a 615-residue protein sequence, read N- to C-terminus: uncharacterized protein (615 aa).

Catalysis depends on aspartate 403, which acts as the Proton acceptor. Residue glutamate 406 is the Proton donor of the active site.

This sequence belongs to the glycosyl hydrolase 15 family.

This is an uncharacterized protein from Methanocaldococcus jannaschii (strain ATCC 43067 / DSM 2661 / JAL-1 / JCM 10045 / NBRC 100440) (Methanococcus jannaschii).